We begin with the raw amino-acid sequence, 238 residues long: Ribonuclease PH (238 aa).

Positions 64–86 are disordered; the sequence is GMLPRSTGSRMDREAARGKQSGR. Phosphate-binding positions include Arg-86 and 124 to 126; that span reads GTR.

This sequence belongs to the RNase PH family. In terms of assembly, homohexameric ring arranged as a trimer of dimers.

It carries out the reaction tRNA(n+1) + phosphate = tRNA(n) + a ribonucleoside 5'-diphosphate. Functionally, phosphorolytic 3'-5' exoribonuclease that plays an important role in tRNA 3'-end maturation. Removes nucleotide residues following the 3'-CCA terminus of tRNAs; can also add nucleotides to the ends of RNA molecules by using nucleoside diphosphates as substrates, but this may not be physiologically important. Probably plays a role in initiation of 16S rRNA degradation (leading to ribosome degradation) during starvation. The protein is Ribonuclease PH of Methylobacillus flagellatus (strain ATCC 51484 / DSM 6875 / VKM B-1610 / KT).